We begin with the raw amino-acid sequence, 463 residues long: Lariat debranching enzyme (463 aa).

A divalent metal cation is bound by residues cysteine 8, histidine 10, aspartate 33, and asparagine 78. Residues serine 118–arginine 148 are lariat recognition loop. Positions 168, 220, and 222 each coordinate a divalent metal cation. A disordered region spans residues serine 250 to lysine 324. The segment covering glycine 256–valine 267 has biased composition (polar residues). Composition is skewed to basic and acidic residues over residues aspartate 276–aspartate 289 and cysteine 299–aspartate 323.

The protein belongs to the lariat debranching enzyme family. Fe(2+) is required as a cofactor. Requires Zn(2+) as cofactor. Mn(2+) serves as cofactor.

The protein resides in the nucleus. The protein localises to the cytoplasm. With respect to regulation, active in presence of diverse metals including Fe(2+), Zn(2+) and Mn(2+). Binds two metal cations in two adjacent alpha and beta metal-binding pockets. In terms of biological role, cleaves the 2'-5' phosphodiester linkage at the branch point of lariat intron pre-mRNAs after splicing and converts them into linear molecules that are subsequently degraded, thereby facilitating ribonucleotide turnover. The polypeptide is Lariat debranching enzyme (dbr1) (Schizosaccharomyces pombe (strain 972 / ATCC 24843) (Fission yeast)).